A 343-amino-acid chain; its full sequence is Probable siderophore transport system permease protein YfhA (343 aa).

The next 9 helical transmembrane spans lie at 15–35 (WIVFLVLLGLTAAVLIISAGL), 69–89 (ILTALCAGVCLAAAGAILQGL), 97–117 (PDIIGITGGAAVAVVLLMMFF), 130–150 (WLPAAAFIGASAVGLIVYLLA), 160–180 (LVLIGIGFSMSAQAMTTLLMI), 204–224 (QHVKIAIILSVILLFICFVAL), 249–269 (FFLLLLSTALTGCAVSVAGTI), 289–309 (GALLPASALIGALLVLTADIV), and 317–337 (VEVPAGVFTAAIGAPYFIYLL).

The protein belongs to the binding-protein-dependent transport system permease family. FecCD subfamily. In terms of assembly, the complex is composed of one ATP-binding protein (YusV), two transmembrane proteins (YfiZ and YfhA) and a solute-binding protein (YfiY).

It localises to the cell membrane. Functionally, part of the ABC transporter complex YfiYZ/YfhA/YusV involved in import of the iron-hydroxamate siderophores schizokinen, arthrobactin and corprogen. The protein is Probable siderophore transport system permease protein YfhA (yfhA) of Bacillus subtilis (strain 168).